A 250-amino-acid chain; its full sequence is Glucosamine-6-phosphate deaminase (250 aa).

Aspartate 67 serves as the catalytic Proton acceptor; for enolization step. The For ring-opening step role is filled by asparagine 136. Histidine 138 functions as the Proton acceptor; for ring-opening step in the catalytic mechanism. The active-site For ring-opening step is the glutamate 143.

Belongs to the glucosamine/galactosamine-6-phosphate isomerase family. NagB subfamily.

The enzyme catalyses alpha-D-glucosamine 6-phosphate + H2O = beta-D-fructose 6-phosphate + NH4(+). It participates in amino-sugar metabolism; N-acetylneuraminate degradation; D-fructose 6-phosphate from N-acetylneuraminate: step 5/5. In terms of biological role, catalyzes the reversible isomerization-deamination of glucosamine 6-phosphate (GlcN6P) to form fructose 6-phosphate (Fru6P) and ammonium ion. This chain is Glucosamine-6-phosphate deaminase, found in Oceanobacillus iheyensis (strain DSM 14371 / CIP 107618 / JCM 11309 / KCTC 3954 / HTE831).